Here is a 572-residue protein sequence, read N- to C-terminus: Urease subunit alpha (572 aa).

The Urease domain occupies 134-572; that stretch reads GGIDSHIHFI…LPLTQRYFLF (439 aa). Ni(2+) contacts are provided by histidine 139, histidine 141, and lysine 222. Lysine 222 carries the post-translational modification N6-carboxylysine. Histidine 224 serves as a coordination point for substrate. Ni(2+)-binding residues include histidine 251 and histidine 277. Residue histidine 325 is the Proton donor of the active site. Aspartate 365 lines the Ni(2+) pocket.

This sequence belongs to the metallo-dependent hydrolases superfamily. Urease alpha subunit family. Heterotrimer of UreA (gamma), UreB (beta) and UreC (alpha) subunits. Three heterotrimers associate to form the active enzyme. The cofactor is Ni cation. Carboxylation allows a single lysine to coordinate two nickel ions.

It is found in the cytoplasm. The catalysed reaction is urea + 2 H2O + H(+) = hydrogencarbonate + 2 NH4(+). Its pathway is nitrogen metabolism; urea degradation; CO(2) and NH(3) from urea (urease route): step 1/1. The protein is Urease subunit alpha of Variovorax paradoxus (strain S110).